The chain runs to 365 residues: Phosphatidylcholine:ceramide cholinephosphotransferase 2 (365 aa).

Residues 9-50 (LEGHLESQTNNSTNTYTSPTEAVEEEDKNGKGKPKTLSNGLR) form a disordered region. Residues 15 to 28 (SQTNNSTNTYTSPT) show a composition bias toward low complexity. Transmembrane regions (helical) follow at residues 80-100 (GIAFVYALFNLILTTVMITVV), 128-148 (FSVSEINGMVLVGLWLTQWLF), 159-179 (FFFIMGTLYLYRCITMYVTTL), 219-239 (ILCGDFLFSGHTVVLTLTYLF), and 248-268 (FWWYHLVCWLLSAAGIICILV). Residue H229 is part of the active site. Active-site residues include H272 and D276. The chain crosses the membrane as a helical span at residues 273-290 (YTVDVIIAYYITTRLFWW). Over 291–365 (YHSMANEKNL…KIGEDNEKST (75 aa)) the chain is Cytoplasmic. S-palmitoyl cysteine attachment occurs at residues C331, C332, C343, and C348.

Belongs to the sphingomyelin synthase family. In terms of processing, palmitoylated on Cys-331, Cys-332, Cys-343 and Cys-348; which plays an important role in plasma membrane localization. Expression restricted to late round spermatids and elongating spermatids but not detected in late elongate spermatids and Sertoli cells (at protein level).

The protein localises to the cell membrane. It localises to the golgi apparatus membrane. The enzyme catalyses an N-acylsphing-4-enine + a 1,2-diacyl-sn-glycero-3-phosphocholine = a sphingomyelin + a 1,2-diacyl-sn-glycerol. It catalyses the reaction an N-acylsphinganine + a 1,2-diacyl-sn-glycero-3-phosphocholine = an N-acylsphinganine-1-phosphocholine + a 1,2-diacyl-sn-glycerol. It carries out the reaction an N-acyl-(4R)-4-hydroxysphinganine + a 1,2-diacyl-sn-glycero-3-phosphocholine = an N-acyl-(4R)-4-hydroxysphinganine-phosphocholine + a 1,2-diacyl-sn-glycerol. The catalysed reaction is an N-acylsphing-4-enine + a 1,2-diacyl-sn-glycero-3-phosphoethanolamine = an N-acylsphing-4-enine 1-phosphoethanolamine + a 1,2-diacyl-sn-glycerol. The enzyme catalyses an N-acylsphinganine + a 1,2-diacyl-sn-glycero-3-phosphoethanolamine = an N-acylsphinganine-1-phosphoethanolamine + a 1,2-diacyl-sn-glycerol. It catalyses the reaction an N-acyl-(4R)-4-hydroxysphinganine + a 1,2-diacyl-sn-glycero-3-phosphoethanolamine = an N-acyl-(4R)-4-hydroxysphinganine-1-phosphoethanolamine + a 1,2-diacyl-sn-glycerol. It carries out the reaction 1,2-dihexadecanoyl-sn-glycero-3-phosphocholine + an N-acylsphing-4-enine = 1,2-dihexadecanoyl-sn-glycerol + a sphingomyelin. The catalysed reaction is 1-(9Z-octadecenoyl)-2-acyl-sn-3-glycerol + a sphingomyelin = a 1-(9Z-octadecenoyl)-2-acyl-sn-glycero-3-phosphocholine + an N-acylsphing-4-enine. The enzyme catalyses N-hexadecanoylsphinganine + a 1,2-diacyl-sn-glycero-3-phosphocholine = N-hexadecanoyl-sphinganine-1-phosphocholine + a 1,2-diacyl-sn-glycerol. It catalyses the reaction N-hexadecanoyl-(4R)-hydroxysphinganine + a 1,2-diacyl-sn-glycero-3-phosphocholine = N-hexadecanoyl-(4R)-hydroxysphinganine-phosphocholine + a 1,2-diacyl-sn-glycerol. It carries out the reaction N-hexadecanoylsphinganine + a 1,2-diacyl-sn-glycero-3-phosphoethanolamine = N-hexadecanoyl-sphinganine-1-phosphoethanolamine + a 1,2-diacyl-sn-glycerol. The catalysed reaction is N-hexadecanoyl-(4R)-hydroxysphinganine + a 1,2-diacyl-sn-glycero-3-phosphoethanolamine = N-hexadecanoyl-(4R)-hydroxysphinganine-1-phosphoethanolamine + a 1,2-diacyl-sn-glycerol. It functions in the pathway sphingolipid metabolism. Functionally, sphingomyelin synthase that primarily contributes to sphingomyelin synthesis and homeostasis at the plasma membrane. Catalyzes the reversible transfer of phosphocholine moiety in sphingomyelin biosynthesis: in the forward reaction transfers phosphocholine head group of phosphatidylcholine (PC) on to ceramide (CER) to form ceramide phosphocholine (sphingomyelin, SM) and diacylglycerol (DAG) as by-product, and in the reverse reaction transfers phosphocholine from SM to DAG to form PC and CER. The direction of the reaction appears to depend on the levels of CER and DAG in the plasma membrane. Does not use free phosphorylcholine or CDP-choline as donors. Can also transfer phosphoethanolamine head group of phosphatidylethanolamine (PE) on to ceramide (CER) to form ceramide phosphoethanolamine (CPE). Regulates receptor-mediated signal transduction via mitogenic DAG and proapoptotic CER, as well as via SM, a structural component of membrane rafts that serve as platforms for signal transduction and protein sorting. To a lesser extent, plays a role in secretory transport via regulation of DAG pool at the Golgi apparatus and its downstream effects on PRKD1. Required for normal bone matrix mineralization. This is Phosphatidylcholine:ceramide cholinephosphotransferase 2 (Sgms2) from Rattus norvegicus (Rat).